Consider the following 107-residue polypeptide: Iron-sulfur cluster assembly protein CyaY (107 aa).

Belongs to the frataxin family.

Functionally, involved in iron-sulfur (Fe-S) cluster assembly. May act as a regulator of Fe-S biogenesis. This Neisseria meningitidis serogroup A / serotype 4A (strain DSM 15465 / Z2491) protein is Iron-sulfur cluster assembly protein CyaY.